A 257-amino-acid chain; its full sequence is MSDEEQRIAEIESLASIFPDLLEETTDKQLVFKFDRDIGMTINLPEDYPSISPPIFELSGPYLRREQKEVLHNSLNDVYIENIGFPVIFNWISLVQDFIRDLPEEVAEPSHVADDVVTPMAEEIDDMNIRHGEVLTDRKSAFQAHLAEVRSKEDVDRVMRILKSNTKICRATHNITAYRYMTEINGKPIHHHDCVDDGEFGASSKMLELMDRMKADNVMVVVSRWYGGIHLGPDRFRHINNLTRQILSDNNYGPKKS.

The region spanning 9-102 (AEIESLASIF…SLVQDFIRDL (94 aa)) is the RWD domain.

The protein belongs to the IMPACT family. As to quaternary structure, interacts with gcn-1; prevents the interaction of gcn-1 with gcn-2 and inhibits gcn-2 kinase activity. Interaction with rpl-39; this interaction occurs in a gcn-1-independent manner. Associates with ribosomes; this interaction occurs in a gcn-1-independent manner. Associates with actin; this interaction occurs in a gcn-1-independent manner.

It localises to the cytoplasm. Translational regulator that ensures constant high levels of translation under amino acid starvation. Plays a role as a negative regulator of the gcn-2 kinase activity; impairs gcn-1-mediated gcn-2 activation, and hence gcn-2-mediated eIF-2-alpha phosphorylation and subsequent down-regulation of protein synthesis in amino acid-starved cells. Plays a role in differentiation of neuronal cells by stimulating neurite outgrowth. The sequence is that of Protein IMPACT homolog from Caenorhabditis elegans.